We begin with the raw amino-acid sequence, 240 residues long: UDP-2,3-diacylglucosamine hydrolase (240 aa).

Mn(2+) contacts are provided by Asp-8, His-10, Asp-41, Asn-79, and His-114. 79 to 80 (NR) contributes to the substrate binding site. The substrate site is built by Asp-122, Ser-160, Asn-164, Lys-167, and His-195. Residues His-195 and His-197 each contribute to the Mn(2+) site.

It belongs to the LpxH family. Mn(2+) is required as a cofactor.

Its subcellular location is the cell inner membrane. The catalysed reaction is UDP-2-N,3-O-bis[(3R)-3-hydroxytetradecanoyl]-alpha-D-glucosamine + H2O = 2-N,3-O-bis[(3R)-3-hydroxytetradecanoyl]-alpha-D-glucosaminyl 1-phosphate + UMP + 2 H(+). It participates in glycolipid biosynthesis; lipid IV(A) biosynthesis; lipid IV(A) from (3R)-3-hydroxytetradecanoyl-[acyl-carrier-protein] and UDP-N-acetyl-alpha-D-glucosamine: step 4/6. Hydrolyzes the pyrophosphate bond of UDP-2,3-diacylglucosamine to yield 2,3-diacylglucosamine 1-phosphate (lipid X) and UMP by catalyzing the attack of water at the alpha-P atom. Involved in the biosynthesis of lipid A, a phosphorylated glycolipid that anchors the lipopolysaccharide to the outer membrane of the cell. This chain is UDP-2,3-diacylglucosamine hydrolase, found in Shigella boydii serotype 18 (strain CDC 3083-94 / BS512).